Here is a 41-residue protein sequence, read N- to C-terminus: MTITPSLKGFFIGLLSGAVVLGLTFAVLIAISQIDKVQRSL.

At threonine 2–serine 6 the chain is on the lumenal side. The helical transmembrane segment at leucine 7 to isoleucine 29 threads the bilayer. Residues alanine 30–leucine 41 lie on the Cytoplasmic side of the membrane.

Belongs to the PsbX family. Type 1 subfamily. As to quaternary structure, PSII is composed of 1 copy each of membrane proteins PsbA, PsbB, PsbC, PsbD, PsbE, PsbF, PsbH, PsbI, PsbJ, PsbK, PsbL, PsbM, PsbT, PsbX, PsbY, PsbZ, Psb30/Ycf12, peripheral proteins PsbO, CyanoQ (PsbQ), PsbU, PsbV and a large number of cofactors. It forms dimeric complexes. Part of a photosystem II (PSII) assembly intermediate complex PSII-I; crystallized from a strain deleted of psbJ, it forms monomeric PSII before addition of the oxygen evolving complex. PSII-I includes 3 assembly factors not found in mature PSII (Psb27, Psb28 and Psb34). PSII binds multiple chlorophylls, carotenoids and specific lipids. is required as a cofactor.

The protein localises to the cellular thylakoid membrane. In terms of biological role, involved in the binding and/or turnover of quinones at the Q(B) site of photosystem II (PSII). PSII is a light-driven water plastoquinone oxidoreductase, using light energy to abstract electrons from H(2)O, generating a proton gradient subsequently used for ATP formation. The chain is Photosystem II reaction center protein X from Thermosynechococcus vestitus (strain NIES-2133 / IAM M-273 / BP-1).